The primary structure comprises 246 residues: MKTSLGKAALLALSMMPVTVFASHWSYEGEGSPEHWGALNEEYKTCQNGMNQSPINIDATFKTHLSPLDTHYIDGPITLINNGHTIQAALKTTTADTITIDGTPFILQQFHFHAPSENTVHGKHYAMEMHLVHKNAKGAVAVVAVMFEQGAENTELNKLWATMPEQAEQTAKIVTQMDLNALLPIDKTYWRFSGSLTTPPCSEGVTRIVLKHPLTLSSAQLAKFSHAMHHDNNRPVQPLNGRVVIE.

The N-terminal stretch at 1–22 (MKTSLGKAALLALSMMPVTVFA) is a signal peptide. The region spanning 23–246 (SHWSYEGEGS…QPLNGRVVIE (224 aa)) is the Alpha-carbonic anhydrase domain. The cysteines at positions 46 and 201 are disulfide-linked. His-84 serves as the catalytic Proton acceptor. 3 residues coordinate Zn(2+): His-111, His-113, and His-130. 197-198 (TT) lines the substrate pocket.

The protein belongs to the alpha-carbonic anhydrase family. Requires Zn(2+) as cofactor.

It is found in the periplasm. The enzyme catalyses hydrogencarbonate + H(+) = CO2 + H2O. In terms of biological role, reversible hydration of carbon dioxide. This Klebsiella pneumoniae protein is Carbonic anhydrase (cah).